The sequence spans 246 residues: Mast cell protease 9 (246 aa).

An N-terminal signal peptide occupies residues 1–18 (MQALLFLMALLLPSRAGA). The propeptide at 19–20 (EE) is activation peptide. Residues 21 to 244 (IIGGVESEPH…HVPWINRVIK (224 aa)) form the Peptidase S1 domain. A disulfide bond links Cys-50 and Cys-66. Catalysis depends on charge relay system residues His-65 and Asp-109. 2 disulfides stabilise this stretch: Cys-143/Cys-208 and Cys-174/Cys-187. The Charge relay system role is filled by Ser-202.

Belongs to the peptidase S1 family. Granzyme subfamily. Selectively expressed in uterine mast cells.

The sequence is that of Mast cell protease 9 (Mcpt9) from Mus musculus (Mouse).